Reading from the N-terminus, the 2153-residue chain is Non-reducing polyketide synthase albA (2153 aa).

The tract at residues 8–244 (YLFGDQTSDI…VKAPIHGPYH (237 aa)) is N-terminal acylcarrier protein transacylase domain (SAT). The Ketosynthase family 3 (KS3) domain maps to 375 to 806 (NSKIAIIGMS…GGNTALLLED (432 aa)). Residues Cys547, His682, and His724 each act as for beta-ketoacyl synthase activity in the active site. The tract at residues 912–1232 (FVFTGQGAQY…LASLHLAGID (321 aa)) is malonyl-CoA:ACP transacylase (MAT) domain. Ser1001 (for acyl/malonyl transferase activity) is an active-site residue. An N-terminal hotdog fold region spans residues 1286 to 1425 (HEYLTTAAQK…CTVRFFDCAA (140 aa)). Positions 1286-1598 (HEYLTTAAQK…FQALSRKILD (313 aa)) constitute a PKS/mFAS DH domain. Residues 1290 to 1603 (TTAAQKVIET…RKILDTVLPP (314 aa)) form a product template (PT) domain region. Residue His1326 is the Proton acceptor; for dehydratase activity of the active site. A C-terminal hotdog fold region spans residues 1452 to 1598 (DAHRLGRGMV…FQALSRKILD (147 aa)). Residue Asp1511 is the Proton donor; for dehydratase activity of the active site. Residues 1608-1643 (KGPARPAASAQKAAPAAAASKSRASAPAPAKPAAKP) form a disordered region. Residues 1610–1643 (PARPAASAQKAAPAAAASKSRASAPAPAKPAAKP) are compositionally biased toward low complexity. The Carrier 1 domain maps to 1643 to 1720 (PSAPSLVKRA…DFKQFLAPMS (78 aa)). Position 1680 is an O-(pantetheine 4'-phosphoryl)serine (Ser1680). The tract at residues 1720 to 1765 (SQGEASDGSTSDPESSSSFNGGSSTDESSAGSPVSSPPNEKVTQVE) is disordered. The segment covering 1725–1748 (SDGSTSDPESSSSFNGGSSTDESS) has biased composition (low complexity). The segment covering 1749-1765 (AGSPVSSPPNEKVTQVE) has biased composition (polar residues). Positions 1764–1841 (VEQHATIKEI…DVEDALGLKP (78 aa)) constitute a Carrier 2 domain. Ser1801 carries the O-(pantetheine 4'-phosphoryl)serine modification. Positions 1879-2151 (SPHPRSTSIL…ELGSFIGNAM (273 aa)) are claisen cyclase domain. Catalysis depends on Ser1969, which acts as the For Claisen cyclase activity.

It carries out the reaction 6 malonyl-CoA + acetyl-CoA + 6 H(+) = naphtopyrone YWA1 + 6 CO2 + 7 CoA + H2O. It participates in secondary metabolite biosynthesis. Non-reducing polyketide synthase; part of the gene cluster that mediates the biosynthesis of aurasperone B, a dimeric gamma-naphthopyrone. The first step in the biosynthesis of aurasperone B is the production of gamma-naphthopyrone precursor YWA1 by the non-reducing polyketide synthase albA, via condensation of one acetyl-CoA starter unit with 6 malonyl-CoA units. YWA1 is then methylated by aunE at position C-6 to yield foncesin which is further methylated at position C-8 by aunD to produce fonsecin B. A key enzyme in the biosynthetic pathway is the cytochrome P450 monooxygenase aunB which catalyzes the oxidative dimerization of fonsecin B to aurasperone B. AunB also catalyzes the oxidative dimerization of rubrofusarin B into aurasperone A. This chain is Non-reducing polyketide synthase albA, found in Aspergillus niger (strain ATCC MYA-4892 / CBS 513.88 / FGSC A1513).